The sequence spans 109 residues: Putative membrane protein insertion efficiency factor (109 aa).

It belongs to the UPF0161 family.

It localises to the cell inner membrane. In terms of biological role, could be involved in insertion of integral membrane proteins into the membrane. This is Putative membrane protein insertion efficiency factor from Rhodopseudomonas palustris (strain BisA53).